Consider the following 299-residue polypeptide: NAD kinase (299 aa).

Asp-71 functions as the Proton acceptor in the catalytic mechanism. NAD(+)-binding positions include 71–72, 145–146, Arg-173, Asp-175, 186–191, Ala-210, and Gln-248; these read DG, ND, and TAYALS.

It belongs to the NAD kinase family. A divalent metal cation is required as a cofactor.

It is found in the cytoplasm. It catalyses the reaction NAD(+) + ATP = ADP + NADP(+) + H(+). Its function is as follows. Involved in the regulation of the intracellular balance of NAD and NADP, and is a key enzyme in the biosynthesis of NADP. Catalyzes specifically the phosphorylation on 2'-hydroxyl of the adenosine moiety of NAD to yield NADP. The sequence is that of NAD kinase from Bordetella avium (strain 197N).